The following is a 237-amino-acid chain: Phosphoribosylaminoimidazole-succinocarboxamide synthase (237 aa).

Belongs to the SAICAR synthetase family.

The enzyme catalyses 5-amino-1-(5-phospho-D-ribosyl)imidazole-4-carboxylate + L-aspartate + ATP = (2S)-2-[5-amino-1-(5-phospho-beta-D-ribosyl)imidazole-4-carboxamido]succinate + ADP + phosphate + 2 H(+). It functions in the pathway purine metabolism; IMP biosynthesis via de novo pathway; 5-amino-1-(5-phospho-D-ribosyl)imidazole-4-carboxamide from 5-amino-1-(5-phospho-D-ribosyl)imidazole-4-carboxylate: step 1/2. The sequence is that of Phosphoribosylaminoimidazole-succinocarboxamide synthase from Idiomarina loihiensis (strain ATCC BAA-735 / DSM 15497 / L2-TR).